The chain runs to 227 residues: Germin-like protein subfamily 1 member 3 (227 aa).

The N-terminal stretch at 1–24 (MKYPFQCFLAKIILLALASSFVSC) is a signal peptide. Residues Cys34 and Cys50 are joined by a disulfide bond. The region spanning 64–212 (SGLNIPGNTN…AFALDINIVR (149 aa)) is the Cupin type-1 domain. Mn(2+)-binding residues include His109, His111, and Glu116. Asn136 is a glycosylation site (N-linked (GlcNAc...) asparagine). His160 is a Mn(2+) binding site.

Belongs to the germin family. As to quaternary structure, oligomer (believed to be a pentamer but probably hexamer).

It is found in the secreted. The protein resides in the extracellular space. Its subcellular location is the apoplast. Functionally, may play a role in plant defense. Probably has no oxalate oxidase activity even if the active site is conserved. The polypeptide is Germin-like protein subfamily 1 member 3 (Arabidopsis thaliana (Mouse-ear cress)).